Here is a 243-residue protein sequence, read N- to C-terminus: NifU-like scaffold protein (243 aa).

Belongs to the NifU family. As to quaternary structure, homodimer.

It is found in the plastid. It localises to the apicoplast. It participates in cofactor biosynthesis; iron-sulfur cluster biosynthesis. In terms of biological role, binds and transfers [4Fe-4S] iron-sulfur clusters to target proteins. The polypeptide is NifU-like scaffold protein (Plasmodium berghei (strain Anka)).